Here is a 425-residue protein sequence, read N- to C-terminus: Histone-binding protein RBBP4 (425 aa).

Alanine 2 carries the N-acetylalanine modification. WD repeat units lie at residues 32-125, 126-175, 176-223, 225-270, 271-314, 315-371, and 372-404; these read YDLV…NHEG, EVNR…RLRG, HQKE…KTIF, GHTA…HSVD, AHTA…HSFE, SHKD…FIHG, and GHTAKISDFSWNPNEPWVICSVSEDNIMQVWQM.

Belongs to the WD repeat RBAP46/RBAP48/MSI1 family. In terms of assembly, binds directly to histone H4, probably via helix 1 of the histone fold, a region that is not accessible when histone H4 is in chromatin. Forms a large corepressor complex that contains ncor1, sin3a and possibly sin3b, histone deacetylases hdac2, hdac1, rbbp4 and possibly rbbp7.

The protein resides in the nucleus. Its subcellular location is the chromosome. It localises to the telomere. Its function is as follows. Core histone-binding subunit that may target chromatin assembly factors, chromatin remodeling factors and histone deacetylases to their histone substrates in a manner that is regulated by nucleosomal DNA. Component of several complexes which regulate chromatin metabolism. This chain is Histone-binding protein RBBP4 (rbbp4), found in Xenopus tropicalis (Western clawed frog).